We begin with the raw amino-acid sequence, 260 residues long: Caveolae-associated protein 3 (260 aa).

The tract at residues 1–84 is interaction with CAVIN1; it reads MGESALESGP…SNTLAQLLAK (84 aa). The leucine-zipper stretch occupies residues 20–78; it reads VHAVTVVTLLEKLATMLETLRERQGGLAQRQGGLAGSVRRIQSNLGALSRSHDTTSNTL. Phosphoserine occurs at positions 62 and 70. A Glycyl lysine isopeptide (Lys-Gly) (interchain with G-Cter in SUMO2) cross-link involves residue K128. An interaction with CAV1 region spans residues 135–201; the sequence is AKAFQKAPEP…SGRKGHAAPT (67 aa). The interval 140-260 is disordered; that stretch reads KAPEPLGPVE…AAVLQVESAA (121 aa). Over residues 157–168 the composition is skewed to acidic residues; it reads AEAEESSDEEEP. Phosphoserine is present on residues S162, S163, and S171. Over residues 201 to 210 the composition is skewed to pro residues; that stretch reads TPTPVKPPRL.

It belongs to the CAVIN family. Component of the CAVIN complex composed of CAVIN1, CAVIN2, CAVIN3 and CAVIN4. Interacts with PRKCD and with phosphatidylserine. Phosphatidylserine may form a bridge between PKC and PKC-binding partners and stabilize the binding. Interacts with PER2. Interacts with CAVIN1 and EPS15L1. Interacts (via leucine-zipper domain) with CAV1 in a cholesterol-sensitive manner. In terms of processing, in vitro, phosphorylated by PRKCD.

The protein localises to the cytoplasm. It is found in the membrane. It localises to the caveola. Its subcellular location is the cytosol. Functionally, regulates the traffic and/or budding of caveolae. Plays a role in caveola formation in a tissue-specific manner. Required for the formation of caveolae in smooth muscle but not in the lung and heart endothelial cells. Regulates the equilibrium between cell surface-associated and cell surface-dissociated caveolae by promoting the rapid release of caveolae from the cell surface. Plays a role in the regulation of the circadian clock. Modulates the period length and phase of circadian gene expression and also regulates expression and interaction of the core clock components PER1/2 and CRY1/2. The protein is Caveolae-associated protein 3 (CAVIN3) of Bos taurus (Bovine).